Here is a 169-residue protein sequence, read N- to C-terminus: MIAWSLVATLQCKMTGKSSFYTCRALMGLFEGGFVADLVLWMSYFYSSSELSIRLSFFWVTLSLTQIITSIVAFGVFHMRGIGGMAGWQWLFLIERIFTLVIGISAYFLMVPSVVQTKKPWSKKGWFTEREEKIIVNKILRDDPTKGDMNNRQGMSLKMLWQGITDYYI.

3 helical membrane-spanning segments follow: residues 25 to 45 (ALMGLFEGGFVADLVLWMSYF), 57 to 77 (FFWVTLSLTQIITSIVAFGVF), and 91 to 111 (LFLIERIFTLVIGISAYFLMV).

The protein belongs to the major facilitator superfamily. Allantoate permease family.

Its subcellular location is the membrane. This is an uncharacterized protein from Saccharomyces cerevisiae (strain ATCC 204508 / S288c) (Baker's yeast).